We begin with the raw amino-acid sequence, 135 residues long: Protein PsiE homolog (135 aa).

4 consecutive transmembrane segments (helical) span residues valine 13–leucine 33, tyrosine 54–valine 74, histidine 82–valine 102, and proline 107–alanine 127.

This sequence belongs to the PsiE family.

It is found in the cell inner membrane. The polypeptide is Protein PsiE homolog (Edwardsiella ictaluri (strain 93-146)).